A 436-amino-acid polypeptide reads, in one-letter code: Prenyltransferase nscD (436 aa).

This sequence belongs to the tryptophan dimethylallyltransferase family.

It functions in the pathway secondary metabolite biosynthesis. Its function is as follows. Prenyltransferase; part of the gene cluster that mediates the biosynthesis of neosartoricin B, a prenylated anthracenone that probably exhibits T-cell antiproliferative activity, suggestive of a physiological role as an immunosuppressive agent. The non-reducing polyketide synthase nscA probably synthesizes and cyclizes the decaketide backbone. The hydrolase nscB then mediates the product release through hydrolysis followed by spontaneous decarboxylation. The prenyltransferase nscD catalyzes the addition of the dimethylallyl group to the aromatic C5. The FAD-dependent monooxygenase nscC is then responsible for the stereospecific hydroxylation at C2. Neosartoricin B can be converted into two additional compounds neosartoricins C and D. Neosartoricin C is a spirocyclic compound that is cyclized through the attack of C3 hydroxyl on C14, followed by dehydration. On the other hand, neosartoricin D is a further cyclized compound in which attack of C2 on C14 in neosartoricin C results in the formation of the acetal-containing dioxabicyclo-octanone ring. Both of these compounds are novel and possibly represent related metabolites of the gene cluster. This is Prenyltransferase nscD from Trichophyton rubrum (strain ATCC MYA-4607 / CBS 118892) (Athlete's foot fungus).